Consider the following 229-residue polypeptide: Large ribosomal subunit protein uL1 (229 aa).

This sequence belongs to the universal ribosomal protein uL1 family. In terms of assembly, part of the 50S ribosomal subunit.

Its function is as follows. Binds directly to 23S rRNA. The L1 stalk is quite mobile in the ribosome, and is involved in E site tRNA release. In terms of biological role, protein L1 is also a translational repressor protein, it controls the translation of the L11 operon by binding to its mRNA. The polypeptide is Large ribosomal subunit protein uL1 (Rhodopseudomonas palustris (strain BisB5)).